Reading from the N-terminus, the 119-residue chain is Protein TusC (119 aa).

It belongs to the DsrF/TusC family. Heterohexamer, formed by a dimer of trimers. The hexameric TusBCD complex contains 2 copies each of TusB, TusC and TusD. The TusBCD complex interacts with TusE.

The protein localises to the cytoplasm. Functionally, part of a sulfur-relay system required for 2-thiolation of 5-methylaminomethyl-2-thiouridine (mnm(5)s(2)U) at tRNA wobble positions. The sequence is that of Protein TusC from Shigella flexneri serotype 5b (strain 8401).